Here is a 459-residue protein sequence, read N- to C-terminus: Probable Delta(5) fatty acid desaturase C (459 aa).

Residues 9–87 form the Cytochrome b5 heme-binding domain; sequence KKLYSWKEIS…LKQYEIGQVS (79 aa). Heme contacts are provided by H45 and H68. 2 helical membrane-spanning segments follow: residues 121–141 and 151–171; these read FAFGIIARLIFVYWFLITSYY and FYLNCLLAIVYSLSNSLFSLH. Residues 174–178 carry the Histidine box-1 motif; that stretch reads HDACH. A helical membrane pass occupies residues 187–207; sequence VWKWLGATYDLFIGASFFYWC. A Histidine box-2 motif is present at residues 210-215; it reads HVIGHH. A run of 2 helical transmembrane segments spans residues 289–309 and 315–335; these read FEIISFIIGKLVFIVFRFIIP and LVNLLTYFFIAEFFFGLYLSF. The short motif at 394-398 is the Histidine box-3 element; sequence QVVHH.

It belongs to the fatty acid desaturase type 1 family. Requires Fe cation as cofactor.

Its subcellular location is the membrane. The protein is Probable Delta(5) fatty acid desaturase C of Dictyostelium discoideum (Social amoeba).